The sequence spans 172 residues: NADH-quinone oxidoreductase subunit B (172 aa).

Residues Cys-46, Cys-47, Cys-111, and Cys-141 each coordinate [4Fe-4S] cluster.

It belongs to the complex I 20 kDa subunit family. In terms of assembly, NDH-1 is composed of 14 different subunits. Subunits NuoB, C, D, E, F, and G constitute the peripheral sector of the complex. [4Fe-4S] cluster is required as a cofactor.

The protein resides in the cell membrane. The catalysed reaction is a quinone + NADH + 5 H(+)(in) = a quinol + NAD(+) + 4 H(+)(out). Its function is as follows. NDH-1 shuttles electrons from NADH, via FMN and iron-sulfur (Fe-S) centers, to quinones in the respiratory chain. The immediate electron acceptor for the enzyme in this species is believed to be a menaquinone. Couples the redox reaction to proton translocation (for every two electrons transferred, four hydrogen ions are translocated across the cytoplasmic membrane), and thus conserves the redox energy in a proton gradient. This is NADH-quinone oxidoreductase subunit B from Bacillus cereus (strain G9842).